Reading from the N-terminus, the 161-residue chain is Lipoprotein signal peptidase (161 aa).

The next 4 helical transmembrane spans lie at 11–31 (PLFW…KLWV), 44–64 (LWSG…FSAF), 66–86 (GGAG…IIFA), and 100–120 (GCIL…GHVI). Residues Asp121 and Asp137 contribute to the active site. Residues 135–155 (LADVSINIGIAALLWASFFPV) traverse the membrane as a helical segment.

Belongs to the peptidase A8 family.

Its subcellular location is the cell inner membrane. It carries out the reaction Release of signal peptides from bacterial membrane prolipoproteins. Hydrolyzes -Xaa-Yaa-Zaa-|-(S,diacylglyceryl)Cys-, in which Xaa is hydrophobic (preferably Leu), and Yaa (Ala or Ser) and Zaa (Gly or Ala) have small, neutral side chains.. It participates in protein modification; lipoprotein biosynthesis (signal peptide cleavage). This protein specifically catalyzes the removal of signal peptides from prolipoproteins. In Synechocystis sp. (strain ATCC 27184 / PCC 6803 / Kazusa), this protein is Lipoprotein signal peptidase.